The primary structure comprises 60 residues: Ribosome biogenesis protein Nop10 (60 aa).

A disordered region spans residues 37-60 (APAPFDPADPHGKYRRALKERRRL). The span at 49 to 60 (KYRRALKERRRL) shows a compositional bias: basic residues.

It belongs to the NOP10 family.

In terms of biological role, involved in ribosome biogenesis; more specifically in 18S rRNA pseudouridylation and in cleavage of pre-rRNA. The sequence is that of Ribosome biogenesis protein Nop10 from Halobacterium salinarum (strain ATCC 29341 / DSM 671 / R1).